A 176-amino-acid chain; its full sequence is HTH-type transcriptional regulator DctR (176 aa).

One can recognise an HTH luxR-type domain in the interval 109–174 (VPEANVSLSR…ELVRHQHIDY (66 aa)). A DNA-binding region (H-T-H motif) is located at residues 133–152 (TEDILEKLKISLKTFYCHKH).

May act as a transcriptional regulator of dctA. The sequence is that of HTH-type transcriptional regulator DctR (dctR) from Shigella flexneri.